A 275-amino-acid chain; its full sequence is Aldo-keto reductase MSMEG_2408/MSMEI_2347 (275 aa).

The Proton donor role is filled by Y49. NADPH is bound by residues L189, I227, K229, S230, V231, R235, S238, and N239. K262 participates in a covalent cross-link: Isoglutamyl lysine isopeptide (Lys-Gln) (interchain with Q-Cter in protein Pup).

Belongs to the aldo/keto reductase family.

The sequence is that of Aldo-keto reductase MSMEG_2408/MSMEI_2347 from Mycolicibacterium smegmatis (strain ATCC 700084 / mc(2)155) (Mycobacterium smegmatis).